The sequence spans 206 residues: Large ribosomal subunit protein uL4 (206 aa).

The segment at alanine 43–glutamate 94 is disordered. Over residues histidine 58 to glycine 70 the composition is skewed to basic residues.

It belongs to the universal ribosomal protein uL4 family. In terms of assembly, part of the 50S ribosomal subunit.

One of the primary rRNA binding proteins, this protein initially binds near the 5'-end of the 23S rRNA. It is important during the early stages of 50S assembly. It makes multiple contacts with different domains of the 23S rRNA in the assembled 50S subunit and ribosome. In terms of biological role, forms part of the polypeptide exit tunnel. The protein is Large ribosomal subunit protein uL4 of Polynucleobacter asymbioticus (strain DSM 18221 / CIP 109841 / QLW-P1DMWA-1) (Polynucleobacter necessarius subsp. asymbioticus).